Reading from the N-terminus, the 196-residue chain is Putative NADH dehydrogenase/NAD(P)H nitroreductase XCV0587 (196 aa).

The protein belongs to the nitroreductase family. HadB/RutE subfamily. The cofactor is FMN.

The polypeptide is Putative NADH dehydrogenase/NAD(P)H nitroreductase XCV0587 (Xanthomonas euvesicatoria pv. vesicatoria (strain 85-10) (Xanthomonas campestris pv. vesicatoria)).